The primary structure comprises 467 residues: Ankyrin repeat and SOCS box protein 10 (467 aa).

ANK repeat units follow at residues 115–144 (ELTT…KPDS), 147–176 (GGRT…DPNT), 180–209 (DGKR…QVDG), 214–243 (EEET…CPDV), 247–289 (EGWT…DADA), 293–322 (DKQR…NANA), and 326–361 (GGHT…AVRV). One can recognise an SOCS box domain in the interval 412-467 (YSSLFALVRQPRSLQHLCRCALRSHLEGCLPHALPRLPLPPRMLRFLQLDFEDLLY).

The protein belongs to the ankyrin SOCS box (ASB) family.

The protein resides in the nucleus. It is found in the cytoplasm. The protein operates within protein modification; protein ubiquitination. May be a substrate-recognition component of a SCF-like ECS (Elongin-Cullin-SOCS-box protein) E3 ubiquitin-protein ligase complex which mediates the ubiquitination and subsequent proteasomal degradation of target proteins. The protein is Ankyrin repeat and SOCS box protein 10 (Asb10) of Mus musculus (Mouse).